Reading from the N-terminus, the 251-residue chain is Probable transcriptional regulatory protein Cgl1663/cg1872 (251 aa).

The segment at 1 to 22 is disordered; the sequence is MSGHSKWATTKHKKAANDAKRG.

The protein belongs to the TACO1 family.

It is found in the cytoplasm. The protein is Probable transcriptional regulatory protein Cgl1663/cg1872 of Corynebacterium glutamicum (strain ATCC 13032 / DSM 20300 / JCM 1318 / BCRC 11384 / CCUG 27702 / LMG 3730 / NBRC 12168 / NCIMB 10025 / NRRL B-2784 / 534).